The following is a 356-amino-acid chain: Histidinol-phosphate aminotransferase (356 aa).

An N6-(pyridoxal phosphate)lysine modification is found at K214.

Belongs to the class-II pyridoxal-phosphate-dependent aminotransferase family. Histidinol-phosphate aminotransferase subfamily. Homodimer. The cofactor is pyridoxal 5'-phosphate.

It carries out the reaction L-histidinol phosphate + 2-oxoglutarate = 3-(imidazol-4-yl)-2-oxopropyl phosphate + L-glutamate. The protein operates within amino-acid biosynthesis; L-histidine biosynthesis; L-histidine from 5-phospho-alpha-D-ribose 1-diphosphate: step 7/9. In Escherichia coli O8 (strain IAI1), this protein is Histidinol-phosphate aminotransferase.